The primary structure comprises 259 residues: Thiazole synthase (259 aa).

Lysine 95 functions as the Schiff-base intermediate with DXP in the catalytic mechanism. 1-deoxy-D-xylulose 5-phosphate-binding positions include glycine 156, 182–183 (AG), and 204–205 (AS).

Belongs to the ThiG family. Homotetramer. Forms heterodimers with either ThiH or ThiS.

The protein resides in the cytoplasm. It carries out the reaction [ThiS sulfur-carrier protein]-C-terminal-Gly-aminoethanethioate + 2-iminoacetate + 1-deoxy-D-xylulose 5-phosphate = [ThiS sulfur-carrier protein]-C-terminal Gly-Gly + 2-[(2R,5Z)-2-carboxy-4-methylthiazol-5(2H)-ylidene]ethyl phosphate + 2 H2O + H(+). It functions in the pathway cofactor biosynthesis; thiamine diphosphate biosynthesis. Its function is as follows. Catalyzes the rearrangement of 1-deoxy-D-xylulose 5-phosphate (DXP) to produce the thiazole phosphate moiety of thiamine. Sulfur is provided by the thiocarboxylate moiety of the carrier protein ThiS. In vitro, sulfur can be provided by H(2)S. This chain is Thiazole synthase, found in Corynebacterium efficiens (strain DSM 44549 / YS-314 / AJ 12310 / JCM 11189 / NBRC 100395).